The following is a 141-amino-acid chain: Large ribosomal subunit protein uL11 (141 aa).

It belongs to the universal ribosomal protein uL11 family. As to quaternary structure, part of the ribosomal stalk of the 50S ribosomal subunit. Interacts with L10 and the large rRNA to form the base of the stalk. L10 forms an elongated spine to which L12 dimers bind in a sequential fashion forming a multimeric L10(L12)X complex. One or more lysine residues are methylated.

Functionally, forms part of the ribosomal stalk which helps the ribosome interact with GTP-bound translation factors. This Syntrophomonas wolfei subsp. wolfei (strain DSM 2245B / Goettingen) protein is Large ribosomal subunit protein uL11.